A 194-amino-acid polypeptide reads, in one-letter code: Imidazoleglycerol-phosphate dehydratase (194 aa).

Belongs to the imidazoleglycerol-phosphate dehydratase family.

The protein resides in the cytoplasm. It carries out the reaction D-erythro-1-(imidazol-4-yl)glycerol 3-phosphate = 3-(imidazol-4-yl)-2-oxopropyl phosphate + H2O. Its pathway is amino-acid biosynthesis; L-histidine biosynthesis; L-histidine from 5-phospho-alpha-D-ribose 1-diphosphate: step 6/9. The sequence is that of Imidazoleglycerol-phosphate dehydratase from Caldanaerobacter subterraneus subsp. tengcongensis (strain DSM 15242 / JCM 11007 / NBRC 100824 / MB4) (Thermoanaerobacter tengcongensis).